Here is a 691-residue protein sequence, read N- to C-terminus: Solute carrier family 28 member 3 (691 aa).

The interval 1–78 is disordered; sequence MELRSTAAPR…HMEDDDEEMQ (78 aa). Topologically, residues 1 to 102 are cytoplasmic; that stretch reads MELRSTAAPR…FCRKHKTTLR (102 aa). Residues 21–30 show a composition bias toward low complexity; it reads NEENFLENEN. Positions 31 to 42 are enriched in polar residues; it reads TSGNNSIRSRAV. The segment covering 43–54 has biased composition (basic and acidic residues); the sequence is QSREHTNTKQDE. A helical transmembrane segment spans residues 103–123; it reads HIIWGILLAGYLVMVISACVL. Residues 124–128 lie on the Extracellular side of the membrane; sequence NFHRA. The chain crosses the membrane as a helical span at residues 129-149; that stretch reads LPLFVITVAAIFFVVWDHLMA. Over 150–173 the chain is Cytoplasmic; the sequence is KYEHRIDEMLSPGRRLLNSHWFWL. Residues 174 to 194 traverse the membrane as a helical segment; it reads KWVIWSSLVLAVIFWLAFDTA. The Extracellular segment spans residues 195–197; that stretch reads KLG. A helical membrane pass occupies residues 198–219; the sequence is QQQLVSFGGLIMYIVLLFLFSK. Residues 220-227 are Cytoplasmic-facing; that stretch reads YPTRVYWR. The helical transmembrane segment at 228-247 threads the bilayer; it reads PVLWGIGLQFLLGLLILRTD. Topologically, residues 248 to 284 are extracellular; the sequence is PGFIAFDWLGRQVQTFLEYTDAGASFVFGEKYKDHFF. The helical transmembrane segment at 285–305 threads the bilayer; that stretch reads AFKVLPIVVFFSTVMSMLYYL. Topologically, residues 306–329 are cytoplasmic; sequence GLMQWIIRKVGWIMLVTTGSSPIE. The helical intramembrane region spans 330-348; that stretch reads SVVASGNIFVGQTESPLLV. Residues 349–361 are Cytoplasmic-facing; it reads RPYLPYITKSELH. The helical transmembrane segment at 362 to 384 threads the bilayer; the sequence is AIMTAGFSTIAGSVLGAYISFGV. The Extracellular portion of the chain corresponds to 385-386; it reads PS. A helical transmembrane segment spans residues 387 to 408; the sequence is SHLLTASVMSAPASLAAAKLFW. Over 409 to 443 the chain is Cytoplasmic; it reads PETEKPKITLKNAMKMESGDSGNLLEAATQGASSS. Residues 444–469 traverse the membrane as a helical segment; that stretch reads ISLVANIAVNLIAFLALLSFMNSALS. Residues 470–507 are Extracellular-facing; that stretch reads WFGNMFDYPQLSFELICSYIFMPFSFMMGVEWQDSFMV. Positions 508–527 form an intramembrane region, helical; the sequence is ARLIGYKTFFNEFVAYEHLS. The Extracellular portion of the chain corresponds to 528–566; sequence KWIHLRKEGGPKFVNGVQQYISIRSEIIATYALCGFANI. The chain crosses the membrane as a helical span at residues 567–577; it reads GSLGIVIGGLT. The Cytoplasmic segment spans residues 578–590; that stretch reads SMAPSRKRDIASG. The helical transmembrane segment at 591–613 threads the bilayer; the sequence is AVRALIAGTVACFMTACIAGILS. The Extracellular segment spans residues 614-691; that stretch reads STPVDINCHH…FNCNGISNTF (78 aa).

Belongs to the concentrative nucleoside transporter (CNT) (TC 2.A.41) family. Homotrimer. As to expression, expressed in pancreas, bone marrow, trachea, mammary gland, liver, prostate, and regions of intestine, brain, lung, placenta, testis, kidney, and heart.

It is found in the cell membrane. Its subcellular location is the endoplasmic reticulum membrane. It carries out the reaction thymidine(out) + 2 Na(+)(out) = thymidine(in) + 2 Na(+)(in). The enzyme catalyses cytidine(out) + 2 Na(+)(out) = cytidine(in) + 2 Na(+)(in). It catalyses the reaction uridine(out) + 2 Na(+)(out) = uridine(in) + 2 Na(+)(in). The catalysed reaction is adenosine(out) + 2 Na(+)(out) = adenosine(in) + 2 Na(+)(in). It carries out the reaction guanosine(out) + 2 Na(+)(out) = guanosine(in) + 2 Na(+)(in). The enzyme catalyses inosine(out) + 2 Na(+)(out) = inosine(in) + 2 Na(+)(in). Functionally, sodium-dependent, pyrimidine- and purine-selective. Involved in the homeostasis of endogenous nucleosides. Exhibits the transport characteristics of the nucleoside transport system cib or N3 subtype (N3/cib) (with marked transport of both thymidine and inosine). Employs a 2:1 sodium/nucleoside ratio. Transports uridine. Also able to transport gemcitabine, 3'-azido-3'-deoxythymidine (AZT), ribavirin and 3-deazauridine. In Homo sapiens (Human), this protein is Solute carrier family 28 member 3 (SLC28A3).